Consider the following 627-residue polypeptide: (-)-alpha-pinene synthase 2, chloroplastic (627 aa).

Residues Met-1–Leu-36 constitute a chloroplast transit peptide. Asp-378, Asp-382, and Asp-530 together coordinate Mg(2+). Residues Asp-378–Asp-382 carry the DDXXD motif motif.

Belongs to the terpene synthase family. Tpsd subfamily. Requires Mg(2+) as cofactor. The cofactor is Mn(2+).

It is found in the plastid. It localises to the chloroplast. The enzyme catalyses (2E)-geranyl diphosphate = (1S,5S)-beta-pinene + diphosphate. It catalyses the reaction (2E)-geranyl diphosphate = (1S,5S)-alpha-pinene + diphosphate. Its pathway is terpene metabolism; oleoresin biosynthesis. Functionally, terpene synthase (TPS) involved in the biosynthesis of monoterpene natural products included in conifer oleoresin secretions and volatile emissions; these compounds contribute to biotic and abiotic stress defense against herbivores and pathogens. Catalyzes the conversion of (2E)-geranyl diphosphate (GPP) to (1S,5S)-beta-pinene. This is (-)-alpha-pinene synthase 2, chloroplastic from Picea glauca (White spruce).